The chain runs to 354 residues: Chorismate synthase (354 aa).

Residue R48 coordinates NADP(+). FMN-binding positions include 125–127, 239–240, G280, 295–299, and R321; these read RSS, NA, and KPVAT.

Belongs to the chorismate synthase family. Homotetramer. The cofactor is FMNH2.

The enzyme catalyses 5-O-(1-carboxyvinyl)-3-phosphoshikimate = chorismate + phosphate. The protein operates within metabolic intermediate biosynthesis; chorismate biosynthesis; chorismate from D-erythrose 4-phosphate and phosphoenolpyruvate: step 7/7. In terms of biological role, catalyzes the anti-1,4-elimination of the C-3 phosphate and the C-6 proR hydrogen from 5-enolpyruvylshikimate-3-phosphate (EPSP) to yield chorismate, which is the branch point compound that serves as the starting substrate for the three terminal pathways of aromatic amino acid biosynthesis. This reaction introduces a second double bond into the aromatic ring system. The protein is Chorismate synthase of Christiangramia forsetii (strain DSM 17595 / CGMCC 1.15422 / KT0803) (Gramella forsetii).